Consider the following 620-residue polypeptide: MALLQIAEPGLSPQPHQRRLAVGIDLGTTNSLVAAVRSGLSEPLADAEGQVILPSAVRYHADRVEVGQSAKIAASQDPFNTVLSVKRLMGRGLTDVKQLGEQLPYRFVGGESHMPFIDTVQGPKSPVEVSADILKVLRQRAEASLGGELVGAVITVPAYFDDAQRQATKDAARLAGLNVLRLLNEPTAAAVAYGLDQKAEGVVAIYDLGGGTFDISILRLTGGVFEVLATGGDTALGGDDFDHAIASWIVTDAGLSADIDPSAQRSLLQAACSAKEALTDAESVEVVYGEWRGTLTREALNALIEPMVARSLKACRRAVRDTGIELEEVEAVVMVGGSTRVPRVREAVAELFGRQPLTEIDPDQVVAIGAAIQADTLAGNKRDGGELLLLDVIPLSLGLETMGGLMEKVIPRNTTIPVARGQEFTTYKDGQTAMKIHVLQGERELISDCRSLARFELRGIPPMVAGAAKIRVTFQVDADGLLSVSAREMGSGIESSIQVKPSYGLTDDEVTRMLKDSFEYAGDDKVARVLREHQVDAERLLEAVQGALDADGERLLDEEERLVINLQMDELRELMQGTDGYAIEQQTKRLSQVTDAFAARRLDSTVKAALAGRNLNEIEE.

It belongs to the heat shock protein 70 family.

Functionally, chaperone involved in the maturation of iron-sulfur cluster-containing proteins. Has a low intrinsic ATPase activity which is markedly stimulated by HscB. The protein is Chaperone protein HscA homolog of Pseudomonas syringae pv. syringae (strain B728a).